We begin with the raw amino-acid sequence, 89 residues long: DNA-directed RNA polymerase subunit omega (89 aa).

It belongs to the RNA polymerase subunit omega family. In terms of assembly, the RNAP catalytic core consists of 2 alpha, 1 beta, 1 beta' and 1 omega subunit. When a sigma factor is associated with the core the holoenzyme is formed, which can initiate transcription.

The catalysed reaction is RNA(n) + a ribonucleoside 5'-triphosphate = RNA(n+1) + diphosphate. Its function is as follows. Promotes RNA polymerase assembly. Latches the N- and C-terminal regions of the beta' subunit thereby facilitating its interaction with the beta and alpha subunits. The sequence is that of DNA-directed RNA polymerase subunit omega (rpoZ) from Pasteurella multocida (strain Pm70).